We begin with the raw amino-acid sequence, 367 residues long: Ferredoxin--NADP reductase 2 (367 aa).

Residues Asp56, Gln64, Tyr69, Val109, Phe144, Asp309, and Thr350 each coordinate FAD.

It belongs to the ferredoxin--NADP reductase type 2 family. As to quaternary structure, homodimer. It depends on FAD as a cofactor.

The enzyme catalyses 2 reduced [2Fe-2S]-[ferredoxin] + NADP(+) + H(+) = 2 oxidized [2Fe-2S]-[ferredoxin] + NADPH. The sequence is that of Ferredoxin--NADP reductase 2 from Cupriavidus metallidurans (strain ATCC 43123 / DSM 2839 / NBRC 102507 / CH34) (Ralstonia metallidurans).